The following is a 152-amino-acid chain: SMN complex subunit smn1 (152 aa).

An interacts with yip11/gem2 region spans residues 26–51; that stretch reads KKYHSIEAKGGVSDPDSRLDGEKLIS. Residues 88 to 110 form a disordered region; sequence DNKGLSDEKPETRAAETHQEFME. Residues 91–108 are compositionally biased toward basic and acidic residues; sequence GLSDEKPETRAAETHQEF. Positions 130-152 are may interact with gem8; the sequence is SWYYAGYYTGLAEGLAKSEQRKD.

Belongs to the SMN family. As to quaternary structure, homooligomer; may form homodimers and homotetramers. Part of the core SMN complex at least composed of smn1, yip11/gem2, gem6, gem7 and gem8. Part of the SMN-Sm complex. Interacts with yip11/gem2; the interaction is direct. Interacts with gem8; the interaction is direct. Interacts with proteins of the Sm complex, including smn1, smb1, smd1, smd2 and smd3.

The protein localises to the nucleus. In terms of biological role, the SMN complex catalyzes the assembly of small nuclear ribonucleoproteins (snRNPs), the building blocks of the spliceosome, and thereby plays an important role in the splicing of cellular pre-mRNAs. Most spliceosomal snRNPs contain a common set of Sm proteins smb1, smd1, smd2, smd3, sme1, smf1 and smg1 that assemble in a heptameric protein ring on the Sm site of the small nuclear RNA to form the core snRNP (Sm core). In the cytosol, the Sm proteins smd1, smd2, sme1, smf1 and smg1 (5Sm) are trapped in an inactive 6S pICln-Sm complex by the chaperone saf5 that controls the assembly of the core snRNP. To assemble core snRNPs, the SMN complex accepts the trapped 5Sm proteins from saf5 forming an intermediate. Binding of snRNA inside 5Sm triggers eviction of the SMN complex, thereby allowing binding of smd3 and smb1 to complete assembly of the core snRNP. Within the SMN complex, smn1 acts as a structural backbone and together with yip11/gem2 it gathers the Sm complex subunits. The chain is SMN complex subunit smn1 from Schizosaccharomyces pombe (strain 972 / ATCC 24843) (Fission yeast).